The primary structure comprises 607 residues: F-box protein At-B (607 aa).

The 39-residue stretch at 9–47 (LAEEILKRLDLENLCSVACVSTTLRSAVVSGVLPSLTSL) folds into the F-box domain. LRR repeat units lie at residues 51-76 (VFSPDDETLNHVLRGCIGLSSLTLNC), 77-99 (LRLNAASVRGVLGPHLRELHLLR), 100-125 (CSLLSSTVLTYIGTLCPNLRVLTLEM), 130-155 (SPDVFQSNLTQMLNGCPYLESLQLNI), 228-253 (LDLISDRLIIAITGSLPQLVKLDLED), 262-286 (DNDLTYTGLQALGFCQQLTSLSLVR), 295-320 (FKRINDMGIFLLSEACKGLESVRLGG), 321-346 (FPKVSDAGFASLLHSCRNLKKFEVRG), 347-372 (AFLLSDLAFHDVTGSSCSLQEVRLST), 373-397 (CPLITSEAVKKLGLCGNLEVLDLGS), 398-422 (CKSISDSCLNSVSALRKLTSLNLAG), 424-447 (DVTDSGMLALGKSDVPITQLSLRG), 448-477 (CRRVSDRGISYLLNNEGTISKTLSTLDLGH), 478-503 (MPGISDRAIHTITHCCKALTELSIRS), 504-536 (CFHVTDSSIESLATWERQAEGGSKQLRKLNVHN), and 537-563 (CVSLTTGALRWLSKPSFAGLHWLGMGQ).

The polypeptide is F-box protein At-B (ATB) (Arabidopsis thaliana (Mouse-ear cress)).